Consider the following 491-residue polypeptide: uncharacterized protein (491 aa).

267–274 is a binding site for ATP; sequence GIQGTGKS.

This sequence belongs to the AAA ATPase family. Highly divergent.

It localises to the plastid. It is found in the chloroplast. This is an uncharacterized protein from Gracilaria tenuistipitata var. liui (Red alga).